Here is a 291-residue protein sequence, read N- to C-terminus: Protein/nucleic acid deglycase HchA (291 aa).

The span at 1–18 shows a compositional bias: basic and acidic residues; it reads MSNERDTSRTPTPDHAEH. Residues 1-20 are disordered; the sequence is MSNERDTSRTPTPDHAEHNA. The active-site Nucleophile is Cys-188.

The protein belongs to the peptidase C56 family. HchA subfamily.

The protein localises to the cytoplasm. The catalysed reaction is N(omega)-(1-hydroxy-2-oxopropyl)-L-arginyl-[protein] + H2O = lactate + L-arginyl-[protein] + H(+). It carries out the reaction N(6)-(1-hydroxy-2-oxopropyl)-L-lysyl-[protein] + H2O = lactate + L-lysyl-[protein] + H(+). The enzyme catalyses S-(1-hydroxy-2-oxopropyl)-L-cysteinyl-[protein] + H2O = lactate + L-cysteinyl-[protein] + H(+). It catalyses the reaction N(omega)-(1-hydroxy-2-oxoethyl)-L-arginyl-[protein] + H2O = L-arginyl-[protein] + glycolate + H(+). The catalysed reaction is N(6)-(1-hydroxy-2-oxoethyl)-L-lysyl-[protein] + H2O = glycolate + L-lysyl-[protein] + H(+). It carries out the reaction S-(1-hydroxy-2-oxoethyl)-L-cysteinyl-[protein] + H2O = glycolate + L-cysteinyl-[protein] + H(+). The enzyme catalyses N(2)-(1-hydroxy-2-oxopropyl)-dGTP + H2O = lactate + dGTP + H(+). It catalyses the reaction N(2)-(1-hydroxy-2-oxopropyl)-GTP + H2O = lactate + GTP + H(+). The catalysed reaction is N(2)-(1-hydroxy-2-oxopropyl)-GDP + H2O = lactate + GDP + H(+). It carries out the reaction N(2)-(1-hydroxy-2-oxopropyl)-GMP + H2O = lactate + GMP + H(+). The enzyme catalyses N(2)-(1-hydroxy-2-oxoethyl)-dGTP + H2O = dGTP + glycolate + H(+). It catalyses the reaction N(2)-(1-hydroxy-2-oxoethyl)-GTP + H2O = glycolate + GTP + H(+). The catalysed reaction is N(2)-(1-hydroxy-2-oxoethyl)-GDP + H2O = glycolate + GDP + H(+). It carries out the reaction N(2)-(1-hydroxy-2-oxoethyl)-GMP + H2O = glycolate + GMP + H(+). The enzyme catalyses an N(2)-(1-hydroxy-2-oxopropyl)-guanosine in RNA + H2O = a guanosine in RNA + lactate + H(+). It catalyses the reaction an N(2)-(1-hydroxy-2-oxopropyl)-2'-deoxyguanosine in DNA + H2O = a 2'-deoxyguanosine in DNA + lactate + H(+). The catalysed reaction is an N(2)-(1-hydroxy-2-oxoethyl)-guanosine in RNA + H2O = a guanosine in RNA + glycolate + H(+). It carries out the reaction an N(2)-(1-hydroxy-2-oxoethyl)-2'-deoxyguanosine in DNA + H2O = a 2'-deoxyguanosine in DNA + glycolate + H(+). In terms of biological role, protein and nucleotide deglycase that catalyzes the deglycation of the Maillard adducts formed between amino groups of proteins or nucleotides and reactive carbonyl groups of glyoxals. Thus, functions as a protein deglycase that repairs methylglyoxal- and glyoxal-glycated proteins, and releases repaired proteins and lactate or glycolate, respectively. Deglycates cysteine, arginine and lysine residues in proteins, and thus reactivates these proteins by reversing glycation by glyoxals. Acts on early glycation intermediates (hemithioacetals and aminocarbinols), preventing the formation of Schiff bases and advanced glycation endproducts (AGE). Also functions as a nucleotide deglycase able to repair glycated guanine in the free nucleotide pool (GTP, GDP, GMP, dGTP) and in DNA and RNA. Is thus involved in a major nucleotide repair system named guanine glycation repair (GG repair), dedicated to reversing methylglyoxal and glyoxal damage via nucleotide sanitization and direct nucleic acid repair. Plays an important role in protecting cells from carbonyl stress. This chain is Protein/nucleic acid deglycase HchA, found in Pseudomonas aeruginosa (strain LESB58).